A 93-amino-acid polypeptide reads, in one-letter code: Small ribosomal subunit protein uS19 (93 aa).

It belongs to the universal ribosomal protein uS19 family.

Functionally, protein S19 forms a complex with S13 that binds strongly to the 16S ribosomal RNA. In Brevibacillus brevis (strain 47 / JCM 6285 / NBRC 100599), this protein is Small ribosomal subunit protein uS19.